The chain runs to 377 residues: Phosphoserine aminotransferase (377 aa).

Residue Arg43 participates in L-glutamate binding. Pyridoxal 5'-phosphate is bound by residues Trp105, Thr164, Asp189, and Gln212. An N6-(pyridoxal phosphate)lysine modification is found at Lys213. Residue 254–255 participates in pyridoxal 5'-phosphate binding; that stretch reads NT.

The protein belongs to the class-V pyridoxal-phosphate-dependent aminotransferase family. SerC subfamily. Homodimer. Pyridoxal 5'-phosphate serves as cofactor.

It is found in the cytoplasm. It carries out the reaction O-phospho-L-serine + 2-oxoglutarate = 3-phosphooxypyruvate + L-glutamate. It catalyses the reaction 4-(phosphooxy)-L-threonine + 2-oxoglutarate = (R)-3-hydroxy-2-oxo-4-phosphooxybutanoate + L-glutamate. It participates in amino-acid biosynthesis; L-serine biosynthesis; L-serine from 3-phospho-D-glycerate: step 2/3. It functions in the pathway cofactor biosynthesis; pyridoxine 5'-phosphate biosynthesis; pyridoxine 5'-phosphate from D-erythrose 4-phosphate: step 3/5. Catalyzes the reversible conversion of 3-phosphohydroxypyruvate to phosphoserine and of 3-hydroxy-2-oxo-4-phosphonooxybutanoate to phosphohydroxythreonine. The chain is Phosphoserine aminotransferase from Bordetella pertussis (strain Tohama I / ATCC BAA-589 / NCTC 13251).